Consider the following 442-residue polypeptide: Zinc finger protein sfp1 (442 aa).

The segment covering 193–208 (AASSDMSSDEASSQAE) has biased composition (low complexity). Disordered regions lie at residues 193–219 (AASS…MPES) and 304–333 (SPFV…HDSP). 2 C2H2-type zinc fingers span residues 350–375 (YKCP…LHGH) and 399–422 (YRCE…THSH).

It localises to the cytoplasm. The protein resides in the nucleus. The polypeptide is Zinc finger protein sfp1 (sfp1) (Schizosaccharomyces pombe (strain 972 / ATCC 24843) (Fission yeast)).